A 37-amino-acid polypeptide reads, in one-letter code: MRVQPSVKKICRNCKIIRRNRVVRVICTDLRHKQRQG.

This sequence belongs to the bacterial ribosomal protein bL36 family.

This is Large ribosomal subunit protein bL36A from Neisseria meningitidis serogroup C (strain 053442).